The chain runs to 231 residues: Small ribosomal subunit protein uS3c (231 aa).

Residues 39-123 enclose the KH type-2 domain; that stretch reads LRNFIKKKYI…HLRLSVKPLR (85 aa).

Belongs to the universal ribosomal protein uS3 family. In terms of assembly, part of the 30S ribosomal subunit.

The protein localises to the plastid. It localises to the chloroplast. This Chlorella vulgaris (Green alga) protein is Small ribosomal subunit protein uS3c (rps3).